A 101-amino-acid polypeptide reads, in one-letter code: Vacuolar ATPase assembly integral membrane protein VMA21 (101 aa).

The Cytoplasmic segment spans residues 1 to 25; sequence MERPDKAALNALQPPEFRNESSLAS. Residues 26–46 traverse the membrane as a helical segment; that stretch reads TLKTLLFFTALMITVPIGLYF. The Lumenal portion of the chain corresponds to 47-65; the sequence is TTKSYIFEGALGMSNRDSY. A helical membrane pass occupies residues 66 to 86; sequence FYAAIVAVVAVHVVLALFVYV. Residues 87-101 are Cytoplasmic-facing; it reads AWNEGSRQWREGKQD.

It belongs to the VMA21 family. In terms of assembly, associates with the V0 complex of the vacuolar ATPase (V-ATPase). Interacts with ATP6AP2.

It is found in the endoplasmic reticulum membrane. The protein resides in the endoplasmic reticulum-Golgi intermediate compartment membrane. The protein localises to the cytoplasmic vesicle. It localises to the COPII-coated vesicle membrane. Required for the assembly of the V0 complex of the vacuolar ATPase (V-ATPase) in the endoplasmic reticulum. The sequence is that of Vacuolar ATPase assembly integral membrane protein VMA21 from Homo sapiens (Human).